Here is a 265-residue protein sequence, read N- to C-terminus: Cytochrome c oxidase subunit 3 (265 aa).

7 helical membrane passes run 16-36 (PWPISGSLGALATTVGGVMYM), 41-61 (GGATLLSLGLIFILYTMFVWW), 81-101 (GPRYGSISFIVSEVMFLFAFF), 137-157 (TPILLSSGAAVTWAHHAILAG), 162-182 (AVYALVATVSLALVFTGFQGM), 200-220 (FFLATGFHGFHVIIGTLFLII), and 245-265 (WHFVDVVRLFPFVSIYWWGGI).

The protein belongs to the cytochrome c oxidase subunit 3 family. As to quaternary structure, component of the cytochrome c oxidase (complex IV, CIV), a multisubunit enzyme composed of a catalytic core of 3 subunits and several supernumerary subunits. The complex exists as a monomer or a dimer and forms supercomplexes (SCs) in the inner mitochondrial membrane with ubiquinol-cytochrome c oxidoreductase (cytochrome b-c1 complex, complex III, CIII).

The protein localises to the mitochondrion inner membrane. It carries out the reaction 4 Fe(II)-[cytochrome c] + O2 + 8 H(+)(in) = 4 Fe(III)-[cytochrome c] + 2 H2O + 4 H(+)(out). Component of the cytochrome c oxidase, the last enzyme in the mitochondrial electron transport chain which drives oxidative phosphorylation. The respiratory chain contains 3 multisubunit complexes succinate dehydrogenase (complex II, CII), ubiquinol-cytochrome c oxidoreductase (cytochrome b-c1 complex, complex III, CIII) and cytochrome c oxidase (complex IV, CIV), that cooperate to transfer electrons derived from NADH and succinate to molecular oxygen, creating an electrochemical gradient over the inner membrane that drives transmembrane transport and the ATP synthase. Cytochrome c oxidase is the component of the respiratory chain that catalyzes the reduction of oxygen to water. Electrons originating from reduced cytochrome c in the intermembrane space (IMS) are transferred via the dinuclear copper A center (CU(A)) of subunit 2 and heme A of subunit 1 to the active site in subunit 1, a binuclear center (BNC) formed by heme A3 and copper B (CU(B)). The BNC reduces molecular oxygen to 2 water molecules using 4 electrons from cytochrome c in the IMS and 4 protons from the mitochondrial matrix. This chain is Cytochrome c oxidase subunit 3 (COX3), found in Vicia faba (Broad bean).